Here is a 196-residue protein sequence, read N- to C-terminus: Holliday junction branch migration complex subunit RuvA (196 aa).

Residues 1 to 63 (MYDYIKGTLV…DDAHLLFGFH (63 aa)) form a domain I region. Residues 64–142 (TEDEKEVFLK…ELPAETTNTT (79 aa)) form a domain II region. The segment at 143–146 (ANQT) is flexible linker. The tract at residues 147-196 (AGNQQLDEAMEALLALGYKSTELKKVKAFFEDTNETAEQYIKSALKMLMK) is domain III.

It belongs to the RuvA family. In terms of assembly, homotetramer. Forms an RuvA(8)-RuvB(12)-Holliday junction (HJ) complex. HJ DNA is sandwiched between 2 RuvA tetramers; dsDNA enters through RuvA and exits via RuvB. An RuvB hexamer assembles on each DNA strand where it exits the tetramer. Each RuvB hexamer is contacted by two RuvA subunits (via domain III) on 2 adjacent RuvB subunits; this complex drives branch migration. In the full resolvosome a probable DNA-RuvA(4)-RuvB(12)-RuvC(2) complex forms which resolves the HJ.

The protein resides in the cytoplasm. Functionally, the RuvA-RuvB-RuvC complex processes Holliday junction (HJ) DNA during genetic recombination and DNA repair, while the RuvA-RuvB complex plays an important role in the rescue of blocked DNA replication forks via replication fork reversal (RFR). RuvA specifically binds to HJ cruciform DNA, conferring on it an open structure. The RuvB hexamer acts as an ATP-dependent pump, pulling dsDNA into and through the RuvAB complex. HJ branch migration allows RuvC to scan DNA until it finds its consensus sequence, where it cleaves and resolves the cruciform DNA. This is Holliday junction branch migration complex subunit RuvA from Streptococcus thermophilus (strain CNRZ 1066).